A 2336-amino-acid polypeptide reads, in one-letter code: Voltage-dependent N-type calcium channel subunit alpha-1B (2336 aa).

A disordered region spans residues 1–37 (MVRFGDELGGRYGGTGGGERARGGGAGGAGGPGQGGL). The Cytoplasmic segment spans residues 1 to 90 (MVRFGDELGG…DNVVRKYAKR (90 aa)). A compositionally biased stretch (gly residues) spans 10 to 37 (GRYGGTGGGERARGGGAGGAGGPGQGGL). The residue at position 22 (R22) is an Omega-N-methylarginine. The stretch at 82–359 (NVVRKYAKRI…LVLGVLSGEF (278 aa)) is one I repeat. The helical transmembrane segment at 91–114 (ITEWPPFEYMILATIIANCIVLAL) threads the bilayer. Residues 115–131 (EQHLPDGDKTPMSERLD) are Extracellular-facing. A helical membrane pass occupies residues 132–152 (DTEPYFIGIFCFEAGIKIIAL). The Cytoplasmic segment spans residues 153–163 (GFVFHKGSYLR). A helical transmembrane segment spans residues 164 to 182 (NGWNVMDFVVVLTEILATA). The Extracellular portion of the chain corresponds to 183–187 (GTDFD). Residues 188 to 211 (LRTLRAVRVLRPLKLVSGIPSLQV) traverse the membrane as a helical segment. Topologically, residues 212 to 221 (VLKSIMKAMV) are cytoplasmic. The chain crosses the membrane as a helical span at residues 222–244 (PLLQIGLLLFFAILMFAIIGLEF). Residues 245–331 (YMGKFHKACF…NTNDAAGNTW (87 aa)) are Extracellular-facing. An N-linked (GlcNAc...) asparagine glycan is attached at N256. The helical transmembrane segment at 332 to 356 (NWLYFIPLIIIGSFFMLNLVLGVLS) threads the bilayer. Over 357-483 (GEFAKERERV…FLIRRMVKAQ (127 aa)) the chain is Cytoplasmic. The interval 379–396 (QQIERELNGYLEWIFKAE) is binding to the beta subunit. Position 411 is a phosphoserine (S411). An ATP-binding site is contributed by 452 to 459 (ASLKSGKT). An II repeat occupies 469 to 713 (EKMFRFLIRR…VFLAIAVDNL (245 aa)). A helical membrane pass occupies residues 484 to 502 (SFYWVVLCVVALNTLCVAM). The Extracellular portion of the chain corresponds to 503 to 512 (VHYNQPQRLT). A helical membrane pass occupies residues 513–535 (TALYFAEFVFLGLFLTEMSLKMY). Residues 536–545 (GLGPRSYFRS) are Cytoplasmic-facing. S545 lines the a 1,2-diacyl-sn-glycero-3-phospho-(1D-myo-inositol-4,5-bisphosphate) pocket. A helical transmembrane segment spans residues 546 to 567 (SFNCFDFGVIVGSIFEVVWAAI). Residues 568 to 574 (KPGTSFG) lie on the Extracellular side of the membrane. Residues 575–587 (ISVLRALRLLRIF) traverse the membrane as a helical segment. A 1,2-diacyl-sn-glycero-3-phospho-(1D-myo-inositol-4,5-bisphosphate) contacts are provided by R585 and K588. Residues 588–605 (KVTKYWNSLRNLVVSLLN) are Cytoplasmic-facing. Residues 606-631 (SMKSIISLLFLLFLFIVVFALLGMQL) traverse the membrane as a helical segment. Over 632–683 (FGGQFNFQDETPTTNFDTFPAAILTVFQILTGEDWNAVMYHGIESQGGVSKG) the chain is Extracellular. A helical membrane pass occupies residues 684–710 (MFSSFYFIVLTLFGNYTLLNVFLAIAV). Over 711 to 1149 (DNLANAQELT…FCHYIVTMRY (439 aa)) the chain is Cytoplasmic. S746, S749, and S784 each carry phosphoserine. Disordered regions lie at residues 800–1021 (YAST…HQPK) and 1051–1076 (EQPE…STTV). 6 stretches are compositionally biased toward basic and acidic residues: residues 806–827 (VRPD…RDGL), 870–891 (EQDR…EERA), 920–930 (GSPEEATEREP), 938–948 (HAQDSSKEGKE), 970–981 (GPRETENSEEPT), and 996–1021 (PPER…HQPK). A compositionally biased stretch (polar residues) spans 1059–1076 (QRNVTRMGSQPSDPSTTV). Phosphoserine is present on S1067. The III repeat unit spans residues 1135–1421 (NLLRRFCHYI…IFVALIIITF (287 aa)). The helical transmembrane segment at 1150-1168 (FEMVILVVIALSSIALAAE) threads the bilayer. The Extracellular segment spans residues 1169-1176 (DPVRTDSF). Residues 1177–1201 (RNNALKYMDYIFTGVFTFEMVIKMI) form a helical membrane-spanning segment. The Cytoplasmic portion of the chain corresponds to 1202–1215 (DLGLLLHPGAYFRD). A helical membrane pass occupies residues 1216-1240 (LWNILDFIVVSGALVAFAFSSFMGG). Residues 1241–1246 (SKGKDI) lie on the Extracellular side of the membrane. The helical transmembrane segment at 1247–1267 (NTIKSLRVLRVLRPLKTIKRL) threads the bilayer. The Cytoplasmic segment spans residues 1268-1285 (PKLKAVFDCVVNSLKNVL). A helical transmembrane segment spans residues 1286-1305 (NILIVYMLFMFIFAVIAVQL). The Extracellular segment spans residues 1306–1392 (FKGKFFYCTD…EQGPSPGFRM (87 aa)). The helical transmembrane segment at 1393–1418 (ELSIFYVVYFVVFPFFFVNIFVALII) threads the bilayer. The Cytoplasmic segment spans residues 1419–1473 (ITFQEQGDKVMSECSLEKNERACIDFAISAKPLTRYMPQNKQSFQYKTWTFVVSP). An IV repeat occupies 1458-1711 (NKQSFQYKTW…LFVAVIMDNF (254 aa)). A helical transmembrane segment spans residues 1474–1492 (PFEYFIMAMIALNTVVLMM). Residues 1493–1500 (KFYDAPYE) lie on the Extracellular side of the membrane. A helical membrane pass occupies residues 1501–1525 (YELMLKCLNIVFTSMFSLECILKII). Residues 1526-1535 (AFGVLNYFRD) lie on the Cytoplasmic side of the membrane. The chain crosses the membrane as a helical span at residues 1536–1557 (AWNVFDFVTVLGSITDILVTEI). Over 1558 to 1563 (ANNFIN) the chain is Extracellular. N-linked (GlcNAc...) asparagine glycosylation is present at N1563. A helical membrane pass occupies residues 1564–1582 (LSFLRLFRAARLIKLCRQG). Residues 1583–1601 (YTIRILLWTFVQSFKALPY) lie on the Cytoplasmic side of the membrane. A helical transmembrane segment spans residues 1602–1621 (VCLLIAMLFFIYAIIGMQVF). Topologically, residues 1622–1683 (GNIALDDGTS…ANASECGSDF (62 aa)) are extracellular. N-linked (GlcNAc...) asparagine glycosylation occurs at N1675. A helical transmembrane segment spans residues 1684-1707 (AYFYFVSFIFLCSFLMLNLFVAVI). Residues 1708-2336 (MDNFEYLTRD…YHHPDQDHWC (629 aa)) are Cytoplasmic-facing. One can recognise an EF-hand domain in the interval 1724–1759 (HHLDEFIRVWAEYDPAACGRISYNDMFEMLKHMSPP). Residues D1737, R1743, and D1748 each coordinate Ca(2+). Positions 1981 to 2202 (TLRGPDGEPQ…TPRPSITYKT (222 aa)) are disordered. The segment covering 2048–2062 (SHHHHHRCHRRRDKK) has biased composition (basic residues). A Phosphoserine modification is found at S2065. Over residues 2097 to 2113 (CRRERKQERGRSQERRQ) the composition is skewed to basic and acidic residues. A compositionally biased stretch (polar residues) spans 2161 to 2177 (GSGSVNGSPLMSTSGAS). A phosphoserine mark is found at S2221, S2230, and S2253.

Belongs to the calcium channel alpha-1 subunit (TC 1.A.1.11) family. CACNA1B subfamily. In terms of assembly, multisubunit complex consisting of alpha-1, alpha-2, beta and delta subunits in a 1:1:1:1 ratio. The channel activity is directed by the pore-forming and voltage-sensitive alpha-1 subunit. In many cases, this subunit is sufficient to generate voltage-sensitive calcium channel activity. The auxiliary subunits beta and alpha-2/delta linked by a disulfide bridge regulate the channel activity. Interacts with RIMS1. Interacts with FMR1 (via C-terminus); this interaction induces a decrease in the number of presynaptic functional CACNA1B channels at the cell surface. Phosphorylated in vitro by CaM-kinase II, PKA, PKC and CGPK. Central nervous system.

The protein localises to the membrane. It carries out the reaction Ca(2+)(in) = Ca(2+)(out). With respect to regulation, is specifically blocked by omega-conotoxin GVIA. Is specifically blocked by omega-conotoxin MVIIA (ziconotide). Is insensitive to dihydropyridines (DHP). Voltage-sensitive calcium channels (VSCC) mediate the entry of calcium ions into excitable cells and are also involved in a variety of calcium-dependent processes, including muscle contraction, hormone or neurotransmitter release, gene expression, cell motility, cell division and cell death. This alpha-1B subunit gives rise to N-type calcium currents. N-type calcium channels belong to the 'high-voltage activated' (HVA) group. They are involved in pain signaling. Calcium channels containing alpha-1B subunit may play a role in directed migration of immature neurons. Mediates Ca(2+) release probability at hippocampal neuronal soma and synaptic terminals. In Rattus norvegicus (Rat), this protein is Voltage-dependent N-type calcium channel subunit alpha-1B (Cacna1b).